The sequence spans 310 residues: p-hydroxybenzoic acid efflux pump subunit AaeA (310 aa).

Residues 12–32 (AITVVLVILAFIAIFNAWVYY) form a helical membrane-spanning segment.

This sequence belongs to the membrane fusion protein (MFP) (TC 8.A.1) family.

It localises to the cell inner membrane. Functionally, forms an efflux pump with AaeB. In Shigella sonnei (strain Ss046), this protein is p-hydroxybenzoic acid efflux pump subunit AaeA.